Here is a 526-residue protein sequence, read N- to C-terminus: Na(+)/H(+) antiporter NhaB (526 aa).

12 helical membrane-spanning segments follow: residues 25 to 45 (ILLF…AAGW), 52 to 72 (IFTL…LLAI), 89 to 109 (LVAN…IYFM), 130 to 164 (LSLA…FYAI), 204 to 224 (LMMH…VGEP), 242 to 262 (IRMA…CILV), 305 to 325 (AVIA…VGLI), 350 to 370 (QEAL…AVII), 391 to 411 (LALF…VFVG), 448 to 468 (VATP…LAPL), 479 to 499 (MALP…ELLL), and 505 to 525 (WFYQ…LPAL).

It belongs to the NhaB Na(+)/H(+) (TC 2.A.34) antiporter family.

It is found in the cell inner membrane. It carries out the reaction 2 Na(+)(in) + 3 H(+)(out) = 2 Na(+)(out) + 3 H(+)(in). Functionally, na(+)/H(+) antiporter that extrudes sodium in exchange for external protons. In Aeromonas salmonicida (strain A449), this protein is Na(+)/H(+) antiporter NhaB.